A 130-amino-acid polypeptide reads, in one-letter code: MSGKGKSAGADKASTSRSAKAGLTFPVGRIHRLLRKGNYAQRVGSGAPVYLTSVLEYLTAEILELAGNAARDNKKSRIIPRHLQLAIRNDEELNKLLGDVTIAQGGVLPNIHQNLLPKKSGKGDKASQEL.

Residues K4 and K6 each carry the N6-acetyllysine modification. Q104 carries the N5-methylglutamine modification. K125 is covalently cross-linked (Glycyl lysine isopeptide (Lys-Gly) (interchain with G-Cter in SUMO)). S127 carries the phosphoserine modification. A [ST]-Q motif motif is present at residues 127-128 (SQ).

The protein belongs to the histone H2A family. As to quaternary structure, the nucleosome is a histone octamer containing two molecules each of H2A, H2B, H3 and H4 assembled in one H3-H4 heterotetramer and two H2A-H2B heterodimers. The octamer wraps approximately 147 bp of DNA. Phosphorylated to form H2AS128ph (gamma-H2A) in response to DNA double-strand breaks (DSBs) generated by exogenous genotoxic agents and by stalled replication forks. Phosphorylation is dependent on the DNA damage checkpoint kinases MEC1/ATR and TEL1/ATM, spreads on either side of a detected DSB site and may mark the surrounding chromatin for recruitment of proteins required for DNA damage signaling and repair. Gamma-H2A is removed from the DNA prior to the strand invasion-primer extension step of the repair process and subsequently dephosphorylated. Dephosphorylation is necessary for efficient recovery from the DNA damage checkpoint. In terms of processing, acetylated by ESA1 to form H2AK4ac and H2AK7ac.

The protein localises to the nucleus. Its subcellular location is the chromosome. Its function is as follows. Core component of nucleosome which plays a central role in DNA double strand break (DSB) repair. Nucleosomes wrap and compact DNA into chromatin, limiting DNA accessibility to the cellular machineries which require DNA as a template. Histones thereby play a central role in transcription regulation, DNA repair, DNA replication and chromosomal stability. DNA accessibility is regulated via a complex set of post-translational modifications of histones, also called histone code, and nucleosome remodeling. In Meyerozyma guilliermondii (strain ATCC 6260 / CBS 566 / DSM 6381 / JCM 1539 / NBRC 10279 / NRRL Y-324) (Yeast), this protein is Histone H2A.2 (HTA2).